We begin with the raw amino-acid sequence, 197 residues long: ATP-dependent Clp protease proteolytic subunit 2 (197 aa).

The active-site Nucleophile is serine 96. Residue histidine 121 is part of the active site.

This sequence belongs to the peptidase S14 family. Fourteen ClpP subunits assemble into 2 heptameric rings which stack back to back to give a disk-like structure with a central cavity, resembling the structure of eukaryotic proteasomes.

Its subcellular location is the cytoplasm. The enzyme catalyses Hydrolysis of proteins to small peptides in the presence of ATP and magnesium. alpha-casein is the usual test substrate. In the absence of ATP, only oligopeptides shorter than five residues are hydrolyzed (such as succinyl-Leu-Tyr-|-NHMec, and Leu-Tyr-Leu-|-Tyr-Trp, in which cleavage of the -Tyr-|-Leu- and -Tyr-|-Trp bonds also occurs).. Functionally, cleaves peptides in various proteins in a process that requires ATP hydrolysis. Has a chymotrypsin-like activity. Plays a major role in the degradation of misfolded proteins. This is ATP-dependent Clp protease proteolytic subunit 2 from Parasynechococcus marenigrum (strain WH8102).